The following is a 315-amino-acid chain: Methionyl-tRNA formyltransferase (315 aa).

An N-terminal domain region spans residues 2-189; the sequence is SDSLRIIFAG…LITTLKQLAD (188 aa). Position 113–116 (113–116) interacts with (6S)-5,6,7,8-tetrahydrofolate; the sequence is SLLP. A C-terminal domain region spans residues 210-315; it reads KEEARIDWSL…EWFIPGNRLA (106 aa).

Belongs to the Fmt family.

It carries out the reaction L-methionyl-tRNA(fMet) + (6R)-10-formyltetrahydrofolate = N-formyl-L-methionyl-tRNA(fMet) + (6S)-5,6,7,8-tetrahydrofolate + H(+). Functionally, attaches a formyl group to the free amino group of methionyl-tRNA(fMet). The formyl group appears to play a dual role in the initiator identity of N-formylmethionyl-tRNA by promoting its recognition by IF2 and preventing the misappropriation of this tRNA by the elongation apparatus. The polypeptide is Methionyl-tRNA formyltransferase (Salmonella choleraesuis (strain SC-B67)).